The sequence spans 179 residues: Adenine phosphoribosyltransferase (179 aa).

It belongs to the purine/pyrimidine phosphoribosyltransferase family. As to quaternary structure, homodimer.

It localises to the cytoplasm. The enzyme catalyses AMP + diphosphate = 5-phospho-alpha-D-ribose 1-diphosphate + adenine. Its pathway is purine metabolism; AMP biosynthesis via salvage pathway; AMP from adenine: step 1/1. Its function is as follows. Catalyzes a salvage reaction resulting in the formation of AMP, that is energically less costly than de novo synthesis. This chain is Adenine phosphoribosyltransferase, found in Dinoroseobacter shibae (strain DSM 16493 / NCIMB 14021 / DFL 12).